The primary structure comprises 536 residues: MSLPPFTCRLLAAAAALYLIGLLCVGADTKDVTAPKIPGCSNEFQMVKVENWVNGENGETFTAMTAQFGTMLPSDKDKAVKLPVALTTPLDSCSNLTSKLSWSIALSVRGECAFTVKAQVAQAGGAAALVLINDKEELDEMVCGEKDTSLNVSIPILMITTSSGDALKKSIMQNKKVELLLYAPKSPIVDYAVVFLWLMSVGTVFVASVWSHVTSPKKNDEQYDELSPKKSSNVDATKGGAEEETLDISAMGAVIFVISASTFLVLLFFFMSSWFILILTIFFVIGGMQGMHNINVTLITRRCSKCGQKNLKLPLLGNTSILSLVVLLFCFVVAILWFMNRKTSHAWAGQDIFGICMMINVLQVARLPNIRVATILLCCAFFYDIFWVFISPLIFKQSVMIAVARGSKDTGESIPMLLRIPRLSDPWGGYNMIGFGDILFPGLLICFIFRFDKENNKGVSNGYFPWLMFGYGLGLFLTYLGLYVMNGHGQPALLYLVPCTLGITVILGLVRKELRDLWNYGTQQPSAADVNPSPEA.

Residues 1–29 form the signal peptide; that stretch reads MSLPPFTCRLLAAAAALYLIGLLCVGADT. Over 30–186 the chain is Lumenal; sequence KDVTAPKIPG…VELLLYAPKS (157 aa). Residues 94 to 170 form the PA domain; sequence SNLTSKLSWS…TSSGDALKKS (77 aa). 2 N-linked (GlcNAc...) asparagine glycosylation sites follow: Asn-95 and Asn-151. The chain crosses the membrane as a helical span at residues 187 to 207; the sequence is PIVDYAVVFLWLMSVGTVFVA. Topologically, residues 208–243 are cytoplasmic; it reads SVWSHVTSPKKNDEQYDELSPKKSSNVDATKGGAEE. Residues 218–238 are disordered; the sequence is KNDEQYDELSPKKSSNVDATK. A helical membrane pass occupies residues 244–264; it reads ETLDISAMGAVIFVISASTFL. Topologically, residues 265 to 273 are lumenal; it reads VLLFFFMSS. Residues 274–296 form a helical membrane-spanning segment; that stretch reads WFILILTIFFVIGGMQGMHNINV. At 297-318 the chain is on the cytoplasmic side; the sequence is TLITRRCSKCGQKNLKLPLLGN. The chain crosses the membrane as a helical span at residues 319-339; that stretch reads TSILSLVVLLFCFVVAILWFM. Residues 340 to 344 lie on the Lumenal side of the membrane; it reads NRKTS. A helical membrane pass occupies residues 345 to 365; the sequence is HAWAGQDIFGICMMINVLQVA. Topologically, residues 366-374 are cytoplasmic; that stretch reads RLPNIRVAT. Residues 375–395 traverse the membrane as a helical segment; it reads ILLCCAFFYDIFWVFISPLIF. Asp-384 is an active-site residue. Residues 396 to 428 lie on the Lumenal side of the membrane; sequence KQSVMIAVARGSKDTGESIPMLLRIPRLSDPWG. The chain crosses the membrane as a helical span at residues 429-449; sequence GYNMIGFGDILFPGLLICFIF. The active site involves Asp-437. Topologically, residues 450–463 are cytoplasmic; the sequence is RFDKENNKGVSNGY. A helical membrane pass occupies residues 464–484; sequence FPWLMFGYGLGLFLTYLGLYV. Topologically, residues 485–489 are lumenal; that stretch reads MNGHG. Residues 490 to 510 traverse the membrane as a helical segment; sequence QPALLYLVPCTLGITVILGLV. Residues 491 to 493 carry the PAL motif; the sequence is PAL. The Cytoplasmic portion of the chain corresponds to 511-536; sequence RKELRDLWNYGTQQPSAADVNPSPEA.

This sequence belongs to the peptidase A22B family. Glycosylated.

The protein localises to the endosome membrane. In terms of biological role, intramembrane-cleaving aspartic protease (I-CLiP) that cleaves type II membrane signal peptides in the hydrophobic plane of the membrane. This Arabidopsis thaliana (Mouse-ear cress) protein is Signal peptide peptidase-like 5 (SPPL5).